Here is a 467-residue protein sequence, read N- to C-terminus: Glutamate--tRNA ligase (467 aa).

A 'HIGH' region motif is present at residues 14–24; sequence PSPTGFLHLGG. The span at 124–134 shows a compositional bias: basic and acidic residues; it reads PRYDGTWRPEP. The disordered stretch occupies residues 124 to 156; that stretch reads PRYDGTWRPEPGKTLPPVPAGRKPVVRFKNPQD. Positions 246–250 match the 'KMSKS' region motif; it reads KLSKR. Lys249 serves as a coordination point for ATP.

This sequence belongs to the class-I aminoacyl-tRNA synthetase family. Glutamate--tRNA ligase type 1 subfamily. Monomer.

Its subcellular location is the cytoplasm. The catalysed reaction is tRNA(Glu) + L-glutamate + ATP = L-glutamyl-tRNA(Glu) + AMP + diphosphate. Functionally, catalyzes the attachment of glutamate to tRNA(Glu) in a two-step reaction: glutamate is first activated by ATP to form Glu-AMP and then transferred to the acceptor end of tRNA(Glu). This chain is Glutamate--tRNA ligase, found in Bordetella petrii (strain ATCC BAA-461 / DSM 12804 / CCUG 43448).